The chain runs to 147 residues: Ribonuclease 4 (147 aa).

The first 28 residues, 1–28 (MALQRTHSLLLLLLLTLLGLGLVQPSYG), serve as a signal peptide directing secretion. Q29 bears the Pyrrolidone carboxylic acid mark. DUMP-binding residues include R35, H40, K68, N71, and T72. The active-site Proton acceptor is H40. 4 disulfides stabilise this stretch: C53–C109, C67–C120, C85–C135, and C92–C99. Residue H144 is the Proton donor of the active site. F145 is a binding site for dUMP.

Belongs to the pancreatic ribonuclease family.

The protein resides in the secreted. Its function is as follows. Cleaves preferentially after uridine bases. Has antimicrobial activity against uropathogenic E.coli (UPEC). Probably contributes to urinary tract sterility. This chain is Ribonuclease 4 (RNASE4), found in Pongo abelii (Sumatran orangutan).